The primary structure comprises 197 residues: Phospholipid hydroperoxide glutathione peroxidase GPX4 (197 aa).

At Ser-40 the chain carries Phosphoserine. Sec-73 is a catalytic residue. Sec-73 is a non-standard amino acid (selenocysteine).

This sequence belongs to the glutathione peroxidase family. Monomer. Has a tendency to form higher mass oligomers. Interacts with FUNDC1; this interaction promotes GPX4 recruitment into mitochondria through TOM/TIM complex where it is degraded by mitophagy. In terms of tissue distribution, widely expressed with the highest levels in testis, heart, cerebrum, ileum, stomach, liver, jejunum and epididymis. Expressed primarily in testis and sperm midpiece (at protein level). Expressed in brain (at protein level). Expressed in heart, liver and kidney (at protein level). Expressed in retina, especially in inner segments of photoreceptor cells (at protein level). Highly expressed during embryogenesis. Down-regulated between 14.5 dpc and 17.5 dpc. As to expression, highly expressed during embryogenesis. In contrast to isoform Mitochondrial and isoform Nuclear, which are down-regulated between 14.5 dpc and 17.5 dpc, remains constant. In terms of tissue distribution, mainly expressed in sperm. Weakly expressed during embryogenesis. Down-regulated between 14.5 dpc and 17.5 dpc.

Its subcellular location is the mitochondrion. The protein resides in the cytoplasm. It localises to the nucleus. It carries out the reaction a hydroperoxy polyunsaturated fatty acid + 2 glutathione = a hydroxy polyunsaturated fatty acid + glutathione disulfide + H2O. The catalysed reaction is 2 glutathione + H2O2 = glutathione disulfide + 2 H2O. It catalyses the reaction tert-butyl hydroperoxide + 2 glutathione = tert-butanol + glutathione disulfide + H2O. The enzyme catalyses cumene hydroperoxide + 2 glutathione = 2-phenylpropan-2-ol + glutathione disulfide + H2O. It carries out the reaction (9S)-hydroperoxy-(10E,12Z)-octadecadienoate + 2 glutathione = (9S)-hydroxy-(10E,12Z)-octadecadienoate + glutathione disulfide + H2O. The catalysed reaction is (13S)-hydroperoxy-(9Z,11E)-octadecadienoate + 2 glutathione = (13S)-hydroxy-(9Z,11E)-octadecadienoate + glutathione disulfide + H2O. It catalyses the reaction (5S)-hydroperoxy-(6E,8Z,11Z,14Z)-eicosatetraenoate + 2 glutathione = (5S)-hydroxy-(6E,8Z,11Z,14Z)-eicosatetraenoate + glutathione disulfide + H2O. The enzyme catalyses (12R)-hydroperoxy-(5Z,8Z,10E,14Z)-eicosatetraenoate + 2 glutathione = (12R)-hydroxy-(5Z,8Z,10E,14Z)-eicosatetraenoate + glutathione disulfide + H2O. It carries out the reaction (12S)-hydroperoxy-(5Z,8Z,10E,14Z)-eicosatetraenoate + 2 glutathione = (12S)-hydroxy-(5Z,8Z,10E,14Z)-eicosatetraenoate + glutathione disulfide + H2O. The catalysed reaction is (15S)-hydroperoxy-(5Z,8Z,11Z,13E)-eicosatetraenoate + 2 glutathione = (15S)-hydroxy-(5Z,8Z,11Z,13E)-eicosatetraenoate + glutathione disulfide + H2O. It catalyses the reaction (5S)-hydroperoxy-(6E,8Z,11Z,14Z,17Z)-eicosapentaenoate + 2 glutathione = (5S)-hydroxy-(6E,8Z,11Z,14Z,17Z)-eicosapentaenoate + glutathione disulfide + H2O. The enzyme catalyses (12S)-hydroperoxy-(5Z,8Z,10E,14Z,17Z)-eicosapentaenoate + 2 glutathione = (12S)-hydroxy-(5Z,8Z,10E,14Z,17Z)-eicosapentaenoate + glutathione disulfide + H2O. It carries out the reaction (15S)-hydroperoxy-(5Z,8Z,11Z,13E,17Z)-eicosapentaenoate + 2 glutathione = (15S)-hydroxy-(5Z,8Z,11Z,13E,17Z)-eicosapentaenoate + glutathione disulfide + H2O. The catalysed reaction is (15S)-hydroperoxy-(11Z,13E)-eicosadienoate + 2 glutathione = (15S)-hydroxy-(11Z,13E)-eicosadienoate + glutathione disulfide + H2O. It catalyses the reaction (17S)-hydroperoxy-(4Z,7Z,10Z,13Z,15E,19Z)-docosahexaenoate + 2 glutathione = (17S)-hydroxy-(4Z,7Z,10Z,13Z,15E,19Z)-docosahexaenoate + glutathione disulfide + H2O. The enzyme catalyses a hydroperoxy-1,2-diacyl-glycero-3-phosphocholine + 2 glutathione = a hydroxy-1,2-diacyl-glycero-3-phosphocholine + glutathione disulfide + H2O. In terms of biological role, essential antioxidant peroxidase that directly reduces phospholipid hydroperoxide even if they are incorporated in membranes and lipoproteins. Can also reduce fatty acid hydroperoxide, cholesterol hydroperoxide and thymine hydroperoxide. Plays a key role in protecting cells from oxidative damage by preventing membrane lipid peroxidation. Required to prevent cells from ferroptosis, a non-apoptotic cell death resulting from an iron-dependent accumulation of lipid reactive oxygen species. The presence of selenocysteine (Sec) versus Cys at the active site is essential for life: it provides resistance to overoxidation and prevents cells against ferroptosis. The presence of Sec at the active site is also essential for the survival of a specific type of parvalbumin-positive interneurons, thereby preventing against fatal epileptic seizures. May be required to protect cells from the toxicity of ingested lipid hydroperoxides. Required for normal sperm development and male fertility. Essential for maturation and survival of photoreceptor cells. Plays a role in a primary T-cell response to viral and parasitic infection by protecting T-cells from ferroptosis and by supporting T-cell expansion. Plays a role of glutathione peroxidase in platelets in the arachidonic acid metabolism. Reduces hydroperoxy ester lipids formed by a 15-lipoxygenase that may play a role as down-regulator of the cellular 15-lipoxygenase pathway. Can also reduce small soluble hydroperoxides such as H2O2 and tert-butyl hydroperoxide. Functionally, specifically able to suppress the production of leukotriene and prostaglandin in response to several stimuli by reducing fatty acid hydroperoxide. Specifically required to prevent mitochondrial cell death by mediating reduction of cardiolipin hydroperoxide. Also required for normal sperm development and male fertility. Its function is as follows. Required for male fertility by stabilizing the condensed chromatin in sperm nuclei. This chain is Phospholipid hydroperoxide glutathione peroxidase GPX4, found in Mus musculus (Mouse).